A 160-amino-acid polypeptide reads, in one-letter code: Putative pre-16S rRNA nuclease (160 aa).

It belongs to the YqgF nuclease family.

The protein resides in the cytoplasm. Could be a nuclease involved in processing of the 5'-end of pre-16S rRNA. This chain is Putative pre-16S rRNA nuclease, found in Chelativorans sp. (strain BNC1).